A 298-amino-acid chain; its full sequence is N-acetylmuramic acid 6-phosphate etherase (298 aa).

Residues 55-218 form the SIS domain; that stretch reads IHAQVSGGGR…STGLMIKSGK (164 aa). Residue glutamate 83 is the Proton donor of the active site. Glutamate 114 is an active-site residue.

It belongs to the GCKR-like family. MurNAc-6-P etherase subfamily. In terms of assembly, homodimer.

It carries out the reaction N-acetyl-D-muramate 6-phosphate + H2O = N-acetyl-D-glucosamine 6-phosphate + (R)-lactate. The protein operates within amino-sugar metabolism; 1,6-anhydro-N-acetylmuramate degradation. It functions in the pathway amino-sugar metabolism; N-acetylmuramate degradation. Its pathway is cell wall biogenesis; peptidoglycan recycling. Specifically catalyzes the cleavage of the D-lactyl ether substituent of MurNAc 6-phosphate, producing GlcNAc 6-phosphate and D-lactate. Together with AnmK, is also required for the utilization of anhydro-N-acetylmuramic acid (anhMurNAc) either imported from the medium or derived from its own cell wall murein, and thus plays a role in cell wall recycling. This Escherichia coli (strain SMS-3-5 / SECEC) protein is N-acetylmuramic acid 6-phosphate etherase.